The primary structure comprises 253 residues: tRNA pseudouridine synthase A (253 aa).

Aspartate 53 (nucleophile) is an active-site residue. Tyrosine 112 is a binding site for substrate.

This sequence belongs to the tRNA pseudouridine synthase TruA family. Homodimer.

The catalysed reaction is uridine(38/39/40) in tRNA = pseudouridine(38/39/40) in tRNA. In terms of biological role, formation of pseudouridine at positions 38, 39 and 40 in the anticodon stem and loop of transfer RNAs. This chain is tRNA pseudouridine synthase A, found in Lactococcus lactis subsp. cremoris (strain MG1363).